The sequence spans 522 residues: DNA damage-binding protein CMR1 (522 aa).

The disordered stretch occupies residues 38 to 100; the sequence is AGVLEKSRAP…DNQLLKMGSP (63 aa). Residues 54-63 are compositionally biased toward polar residues; it reads TTNTRATKSA. Serine 64 is modified (phosphoserine). A Phosphothreonine modification is found at threonine 69. Basic and acidic residues predominate over residues 75–84; sequence LRGESADDVK. WD repeat units lie at residues 183–224, 239–281, 287–327, 331–371, 388–427, 442–481, and 482–521; these read ITYE…LADS, LFTK…EVLT, DDSL…SEYN, LADK…KKPE, DSRL…HLSA, GRWT…LAHL, and PTAT…IKQE. Residue serine 224 is modified to Phosphoserine.

Belongs to the WD repeat DDB2/WDR76 family.

It is found in the cytoplasm. Its subcellular location is the nucleus. DNA-binding protein that binds to both single- and double-stranded DNA. Binds preferentially to UV-damaged DNA in vitro. May be involved in DNA-metabolic processes. This chain is DNA damage-binding protein CMR1, found in Saccharomyces cerevisiae (strain ATCC 204508 / S288c) (Baker's yeast).